The chain runs to 249 residues: Protein obstructor-E (249 aa).

Residues 1–21 form the signal peptide; sequence MAKILISALLCVAMFGSMALG. The 59-residue stretch at 22–80 folds into the Chitin-binding type-2 1 domain; it reads SPECPTPNGRFASGDQCDSYTECQDGTPVEKLCPDGLLFHQRTKATGECTYAPYSTCKE. Cysteine 54 and cysteine 70 form a disulfide bridge. Asparagine 88 is a glycosylation site (N-linked (GlcNAc...) asparagine). 2 consecutive Chitin-binding type-2 domains span residues 90 to 148 and 170 to 227; these read TEEC…SCNA and VDVS…ECYA. 2 cysteine pairs are disulfide-bonded: cysteine 124/cysteine 137 and cysteine 203/cysteine 216.

In terms of tissue distribution, uniformly expressed throughout the cuticle of third instar larva.

It is found in the secreted. The protein resides in the extracellular space. The protein localises to the extracellular matrix. Chitin-binding protein that is important for the longitudinal contraction and lateral expansion of the larval cuticle during its conversion into the oval-shaped puparium case. Essential for survival to the second instar larval stage. Confers the orientated contractility and expandability of the larval cuticle by regulating the arrangement of chitin and the formation of supracellular ridges on the cuticle of third instar larvae. Essential for determining pupal body shape; required for the orientated shape change of the cuticle during metamorphosis which involves changes in the morphology of the supracellular ridges. In terms of biological role, mainly involved in regulating pupal shape. Functionally, mainly involved in larvae survival, possibly by maintaining the normal morphology of the larval hindgut during development. This is Protein obstructor-E from Drosophila melanogaster (Fruit fly).